The primary structure comprises 625 residues: 1-deoxy-D-xylulose-5-phosphate synthase (625 aa).

Residues H80 and 121–123 (GHS) contribute to the thiamine diphosphate site. Position 152 (D152) interacts with Mg(2+). Thiamine diphosphate-binding positions include 153 to 154 (GA), N181, Y290, and E371. N181 serves as a coordination point for Mg(2+).

It belongs to the transketolase family. DXPS subfamily. Homodimer. Mg(2+) is required as a cofactor. Thiamine diphosphate serves as cofactor.

It catalyses the reaction D-glyceraldehyde 3-phosphate + pyruvate + H(+) = 1-deoxy-D-xylulose 5-phosphate + CO2. Its pathway is metabolic intermediate biosynthesis; 1-deoxy-D-xylulose 5-phosphate biosynthesis; 1-deoxy-D-xylulose 5-phosphate from D-glyceraldehyde 3-phosphate and pyruvate: step 1/1. In terms of biological role, catalyzes the acyloin condensation reaction between C atoms 2 and 3 of pyruvate and glyceraldehyde 3-phosphate to yield 1-deoxy-D-xylulose-5-phosphate (DXP). In Haemophilus influenzae (strain ATCC 51907 / DSM 11121 / KW20 / Rd), this protein is 1-deoxy-D-xylulose-5-phosphate synthase.